The sequence spans 64 residues: Conotoxin Am1.1 (64 aa).

The N-terminal stretch at 1–22 (MSCLPVFVILLLLTASGPSVDA) is a signal peptide. Positions 23-49 (RLKTKDDVPLSSFRDNAKSTLRRLQDK) are excised as a propeptide. Residue Pro60 is modified to 4-hydroxyproline; partial; in major form.

Belongs to the conotoxin T superfamily. Contains 2 disulfide bonds. As to expression, expressed by the venom duct.

It localises to the secreted. Its function is as follows. Probable toxin that inhibits ion channels. The sequence is that of Conotoxin Am1.1 from Conus amadis (Amadis cone).